A 113-amino-acid polypeptide reads, in one-letter code: Protein ZEO1 (113 aa).

Over residues 1–16 (MSEIQNKAETAAQDVQ) the composition is skewed to polar residues. Residues 1-96 (MSEIQNKAET…AVSEKKETKK (96 aa)) are disordered. S2 is subject to N-acetylserine. The residue at position 2 (S2) is a Phosphoserine. Residues 2-97 (SEIQNKAETA…VSEKKETKKE (96 aa)) adopt a coiled-coil conformation. Positions 17 to 37 (QKLEETKESLQNKGQEVKEQA) are enriched in basic and acidic residues. Residues K18 and K23 each participate in a glycyl lysine isopeptide (Lys-Gly) (interchain with G-Cter in ubiquitin) cross-link. The residue at position 25 (S25) is a Phosphoserine. Glycyl lysine isopeptide (Lys-Gly) (interchain with G-Cter in ubiquitin) cross-links involve residues K29 and K34. S40 bears the Phosphoserine mark. K45 participates in a covalent cross-link: Glycyl lysine isopeptide (Lys-Gly) (interchain with G-Cter in ubiquitin). The residue at position 49 (T49) is a Phosphothreonine. Basic and acidic residues predominate over residues 53-82 (EQVKKEEQNIADGVEQKKTEAANKVEETKK). Glycyl lysine isopeptide (Lys-Gly) (interchain with G-Cter in ubiquitin) cross-links involve residues K57 and K82.

As to quaternary structure, interacts with MID2. In terms of processing, phosphorylation of Ser-25 is induced 2-fold in response to mating pheromone.

It localises to the cell membrane. In terms of biological role, acts antagonistically to MID2 in signaling cell wall stress to the PKC1-MPK1 cell integrity pathway. The protein is Protein ZEO1 (ZEO1) of Saccharomyces cerevisiae (strain ATCC 204508 / S288c) (Baker's yeast).